The primary structure comprises 62 residues: Large ribosomal subunit protein bL32 (62 aa).

This sequence belongs to the bacterial ribosomal protein bL32 family.

The chain is Large ribosomal subunit protein bL32 from Treponema denticola (strain ATCC 35405 / DSM 14222 / CIP 103919 / JCM 8153 / KCTC 15104).